The following is a 312-amino-acid chain: Tetraacyldisaccharide 4'-kinase (312 aa).

60-67 (IAGGSGKT) lines the ATP pocket.

This sequence belongs to the LpxK family.

It carries out the reaction a lipid A disaccharide + ATP = a lipid IVA + ADP + H(+). Its pathway is glycolipid biosynthesis; lipid IV(A) biosynthesis; lipid IV(A) from (3R)-3-hydroxytetradecanoyl-[acyl-carrier-protein] and UDP-N-acetyl-alpha-D-glucosamine: step 6/6. Its function is as follows. Transfers the gamma-phosphate of ATP to the 4'-position of a tetraacyldisaccharide 1-phosphate intermediate (termed DS-1-P) to form tetraacyldisaccharide 1,4'-bis-phosphate (lipid IVA). This is Tetraacyldisaccharide 4'-kinase from Helicobacter pylori (strain J99 / ATCC 700824) (Campylobacter pylori J99).